A 93-amino-acid chain; its full sequence is Probable Fe(2+)-trafficking protein (93 aa).

It belongs to the Fe(2+)-trafficking protein family.

Could be a mediator in iron transactions between iron acquisition and iron-requiring processes, such as synthesis and/or repair of Fe-S clusters in biosynthetic enzymes. This Polaromonas naphthalenivorans (strain CJ2) protein is Probable Fe(2+)-trafficking protein.